Reading from the N-terminus, the 363-residue chain is 3-isopropylmalate dehydrogenase (363 aa).

79 to 92 (GPKWEHLPPNDQPE) contacts NAD(+). The substrate site is built by arginine 100, arginine 110, arginine 139, and aspartate 228. Mg(2+) contacts are provided by aspartate 228, aspartate 252, and aspartate 256. An NAD(+)-binding site is contributed by 286-298 (GSAPDIAGKNIAN).

The protein belongs to the isocitrate and isopropylmalate dehydrogenases family. LeuB type 1 subfamily. As to quaternary structure, homodimer. It depends on Mg(2+) as a cofactor. The cofactor is Mn(2+).

It localises to the cytoplasm. The catalysed reaction is (2R,3S)-3-isopropylmalate + NAD(+) = 4-methyl-2-oxopentanoate + CO2 + NADH. Its pathway is amino-acid biosynthesis; L-leucine biosynthesis; L-leucine from 3-methyl-2-oxobutanoate: step 3/4. Its function is as follows. Catalyzes the oxidation of 3-carboxy-2-hydroxy-4-methylpentanoate (3-isopropylmalate) to 3-carboxy-4-methyl-2-oxopentanoate. The product decarboxylates to 4-methyl-2 oxopentanoate. This is 3-isopropylmalate dehydrogenase from Vibrio vulnificus (strain YJ016).